The chain runs to 157 residues: MRCPKCGGNKSSVVDSRQAEDGNTIRRRRECEECQHRFTTYERVEERTLVVVKKDGTREQFSRDKIFNGIIRSAQKRPVSSDEIEEIVNRIEQKVRSQSDNEINSEYIGSLVMDELAELDEITYVRFASVYRSFKDVGELESLLKQITKGSKKKKDK.

Positions 1–24 are disordered; it reads MRCPKCGGNKSSVVDSRQAEDGNT. The segment at 3–34 is a zinc-finger region; the sequence is CPKCGGNKSSVVDSRQAEDGNTIRRRRECEEC. The ATP-cone domain maps to 49–139; the sequence is LVVVKKDGTR…VYRSFKDVGE (91 aa).

It belongs to the NrdR family. Zn(2+) is required as a cofactor.

Negatively regulates transcription of bacterial ribonucleotide reductase nrd genes and operons by binding to NrdR-boxes. The polypeptide is Transcriptional repressor NrdR (Streptococcus sanguinis (strain SK36)).